Consider the following 217-residue polypeptide: Probable transaldolase (217 aa).

Residue Lys-83 is the Schiff-base intermediate with substrate of the active site.

Belongs to the transaldolase family. Type 3B subfamily.

Its subcellular location is the cytoplasm. The catalysed reaction is D-sedoheptulose 7-phosphate + D-glyceraldehyde 3-phosphate = D-erythrose 4-phosphate + beta-D-fructose 6-phosphate. The protein operates within carbohydrate degradation; pentose phosphate pathway; D-glyceraldehyde 3-phosphate and beta-D-fructose 6-phosphate from D-ribose 5-phosphate and D-xylulose 5-phosphate (non-oxidative stage): step 2/3. Functionally, transaldolase is important for the balance of metabolites in the pentose-phosphate pathway. This Brucella melitensis biotype 1 (strain ATCC 23456 / CCUG 17765 / NCTC 10094 / 16M) protein is Probable transaldolase.